Here is a 213-residue protein sequence, read N- to C-terminus: Adenylate kinase (213 aa).

10–15 (GSGKGT) is an ATP binding site. An NMP region spans residues 30-59 (SVGDLLRNIISSSSELGKKIKGTVESGNLI). AMP contacts are provided by residues arginine 36, 57 to 59 (NLI), 83 to 86 (GFPR), and glutamine 90. Residues 125–160 (NRLACLDCKSIYSVSSFKSTTCAKCKSTRLEKRIDD) are LID. ATP is bound at residue arginine 126. 2 residues coordinate Zn(2+): cysteine 129 and cysteine 132. Residue 135-136 (IY) participates in ATP binding. Zn(2+) is bound by residues cysteine 146 and cysteine 149. 2 residues coordinate AMP: arginine 157 and arginine 169. Leucine 195 serves as a coordination point for ATP.

Belongs to the adenylate kinase family. In terms of assembly, monomer.

It localises to the cytoplasm. It carries out the reaction AMP + ATP = 2 ADP. It functions in the pathway purine metabolism; AMP biosynthesis via salvage pathway; AMP from ADP: step 1/1. Functionally, catalyzes the reversible transfer of the terminal phosphate group between ATP and AMP. Plays an important role in cellular energy homeostasis and in adenine nucleotide metabolism. This Wolbachia sp. subsp. Drosophila simulans (strain wRi) protein is Adenylate kinase.